Reading from the N-terminus, the 459-residue chain is Bifunctional protein GlmU (459 aa).

The segment at 1 to 230 (MTTRNTIILA…FDESMGVNDR (230 aa)) is pyrophosphorylase. UDP-N-acetyl-alpha-D-glucosamine is bound by residues 9–12 (LAAG), lysine 23, glutamine 73, 78–79 (GT), 101–103 (SGD), glycine 140, glutamate 155, asparagine 170, and asparagine 228. Residue aspartate 103 coordinates Mg(2+). Asparagine 228 lines the Mg(2+) pocket. Positions 231-251 (VALSAATKIMRDRINEAHMRD) are linker. Positions 252–459 (GVTLIDPATT…YQKLPYRGED (208 aa)) are N-acetyltransferase. 2 residues coordinate UDP-N-acetyl-alpha-D-glucosamine: arginine 333 and lysine 351. Histidine 363 functions as the Proton acceptor in the catalytic mechanism. Residues tyrosine 366 and asparagine 377 each coordinate UDP-N-acetyl-alpha-D-glucosamine. Residues 386–387 (NY), serine 405, alanine 423, and arginine 440 contribute to the acetyl-CoA site.

It in the N-terminal section; belongs to the N-acetylglucosamine-1-phosphate uridyltransferase family. This sequence in the C-terminal section; belongs to the transferase hexapeptide repeat family. Homotrimer. Mg(2+) is required as a cofactor.

The protein localises to the cytoplasm. The enzyme catalyses alpha-D-glucosamine 1-phosphate + acetyl-CoA = N-acetyl-alpha-D-glucosamine 1-phosphate + CoA + H(+). It carries out the reaction N-acetyl-alpha-D-glucosamine 1-phosphate + UTP + H(+) = UDP-N-acetyl-alpha-D-glucosamine + diphosphate. It functions in the pathway nucleotide-sugar biosynthesis; UDP-N-acetyl-alpha-D-glucosamine biosynthesis; N-acetyl-alpha-D-glucosamine 1-phosphate from alpha-D-glucosamine 6-phosphate (route II): step 2/2. The protein operates within nucleotide-sugar biosynthesis; UDP-N-acetyl-alpha-D-glucosamine biosynthesis; UDP-N-acetyl-alpha-D-glucosamine from N-acetyl-alpha-D-glucosamine 1-phosphate: step 1/1. It participates in bacterial outer membrane biogenesis; LPS lipid A biosynthesis. In terms of biological role, catalyzes the last two sequential reactions in the de novo biosynthetic pathway for UDP-N-acetylglucosamine (UDP-GlcNAc). The C-terminal domain catalyzes the transfer of acetyl group from acetyl coenzyme A to glucosamine-1-phosphate (GlcN-1-P) to produce N-acetylglucosamine-1-phosphate (GlcNAc-1-P), which is converted into UDP-GlcNAc by the transfer of uridine 5-monophosphate (from uridine 5-triphosphate), a reaction catalyzed by the N-terminal domain. In Levilactobacillus brevis (strain ATCC 367 / BCRC 12310 / CIP 105137 / JCM 1170 / LMG 11437 / NCIMB 947 / NCTC 947) (Lactobacillus brevis), this protein is Bifunctional protein GlmU.